The primary structure comprises 610 residues: Glutamine--fructose-6-phosphate aminotransferase [isomerizing] (610 aa).

Catalysis depends on Cys2, which acts as the Nucleophile; for GATase activity. Residues 2–219 (CGIVGAVAQR…EGDVAEITRR (218 aa)) form the Glutamine amidotransferase type-2 domain. 2 SIS domains span residues 287–427 (ADEL…LRGM) and 459–600 (LAEG…VDQP). Catalysis depends on Lys605, which acts as the For Fru-6P isomerization activity.

Homodimer.

It is found in the cytoplasm. It carries out the reaction D-fructose 6-phosphate + L-glutamine = D-glucosamine 6-phosphate + L-glutamate. Its function is as follows. Catalyzes the first step in hexosamine metabolism, converting fructose-6P into glucosamine-6P using glutamine as a nitrogen source. The sequence is that of Glutamine--fructose-6-phosphate aminotransferase [isomerizing] from Pectobacterium atrosepticum (strain SCRI 1043 / ATCC BAA-672) (Erwinia carotovora subsp. atroseptica).